The sequence spans 422 residues: Cell division protein DivIB (422 aa).

Basic and acidic residues-rich tracts occupy residues 1–23 (MVDW…KQEE) and 62–75 (EEAK…DQEQ). The disordered stretch occupies residues 1–77 (MVDWDKEAQR…DFAKDQEQKH (77 aa)). Residues 1–109 (MVDWDKEAQR…LQLKSVSWSR (109 aa)) are Cytoplasmic-facing. The helical transmembrane segment at 110 to 130 (LILAAAFLFMIIFSAFWLSPL) threads the bilayer. In terms of domain architecture, POTRA spans 131-202 (NRIATIEVSG…RTVEVNVQEF (72 aa)). Residues 131–422 (NRIATIEVSG…TVTQTRSSNS (292 aa)) are Extracellular-facing. Residues 329 to 422 (NPLNDPFASP…TVTQTRSSNS (94 aa)) form a disordered region. Over residues 338 to 379 (PEEKASYQEKVDQAKEKSKEKQAKADKHSSESKLGDKPKPRG) the composition is skewed to basic and acidic residues. The span at 389-422 (TSSQRQTSSQSSPRPGTNSSQQSSTVTQTRSSNS) shows a compositional bias: low complexity.

This sequence belongs to the FtsQ/DivIB family. DivIB subfamily.

It is found in the cell membrane. In terms of biological role, cell division protein that may be involved in stabilizing or promoting the assembly of the division complex. This Aerococcus urinae (strain CCUG 59500 / ACS-120-V-Col10a) protein is Cell division protein DivIB.